A 107-amino-acid chain; its full sequence is HTH-type transcriptional regulator Rv2034 (107 aa).

Residues 1-93 (MSTYRSPDRA…DLDRFWTRAL (93 aa)) enclose the HTH arsR-type domain. Residues 33–56 (VGELARDLPVSRPAVSQHLKVLKT) constitute a DNA-binding region (H-T-H motif).

Homodimer.

DNA-binding ability is not susceptible to zinc, nickel, cobalt, cadmium, lead, copper and manganese ions. Its function is as follows. Involved in the regulation of lipid metabolism and hypoxic response. Positively regulates transcription of various genes, such as phoP, groEL2 and dosR. Negatively regulates its own transcription. Acts by binding to a specific palindromic sequence motif in promoter regions. The polypeptide is HTH-type transcriptional regulator Rv2034 (Mycobacterium tuberculosis (strain ATCC 25618 / H37Rv)).